The sequence spans 414 residues: Phosphoglycerate kinase (414 aa).

Substrate-binding positions include 19–21 (DLN), Arg-34, 57–60 (HQSK), Arg-114, and Arg-154. ATP-binding positions include Glu-332 and 358-361 (GGHS).

It belongs to the phosphoglycerate kinase family. As to quaternary structure, monomer.

The protein resides in the cytoplasm. It catalyses the reaction (2R)-3-phosphoglycerate + ATP = (2R)-3-phospho-glyceroyl phosphate + ADP. It participates in carbohydrate degradation; glycolysis; pyruvate from D-glyceraldehyde 3-phosphate: step 2/5. The chain is Phosphoglycerate kinase from Thermococcus onnurineus (strain NA1).